We begin with the raw amino-acid sequence, 210 residues long: Somatotropin-2 (210 aa).

Residues 1–22 (MGQVFLLMPVLLVSCFLSQGAA) form the signal peptide. Residue H38 participates in Zn(2+) binding. An intrachain disulfide couples C71 to C183. E192 contacts Zn(2+). The cysteines at positions 200 and 208 are disulfide-linked.

It belongs to the somatotropin/prolactin family.

The protein localises to the secreted. Growth hormone plays an important role in growth control and is involved in the regulation of several anabolic processes. Implicated as an osmoregulatory substance important for seawater adaptation. The polypeptide is Somatotropin-2 (gh2) (Oncorhynchus nerka (Sockeye salmon)).